A 488-amino-acid chain; its full sequence is Ribulose bisphosphate carboxylase large chain (488 aa).

Substrate contacts are provided by Asn127 and Thr177. The Proton acceptor role is filled by Lys179. Lys181 serves as a coordination point for substrate. 3 residues coordinate Mg(2+): Lys205, Asp207, and Glu208. Lys205 bears the N6-carboxylysine mark. Catalysis depends on His297, which acts as the Proton acceptor. Positions 298, 330, and 382 each coordinate substrate.

It belongs to the RuBisCO large chain family. Type I subfamily. In terms of assembly, heterohexadecamer of 8 large chains and 8 small chains. It depends on Mg(2+) as a cofactor.

Its subcellular location is the plastid. The protein resides in the chloroplast. It catalyses the reaction 2 (2R)-3-phosphoglycerate + 2 H(+) = D-ribulose 1,5-bisphosphate + CO2 + H2O. The enzyme catalyses D-ribulose 1,5-bisphosphate + O2 = 2-phosphoglycolate + (2R)-3-phosphoglycerate + 2 H(+). Its function is as follows. RuBisCO catalyzes two reactions: the carboxylation of D-ribulose 1,5-bisphosphate, the primary event in carbon dioxide fixation, as well as the oxidative fragmentation of the pentose substrate in the photorespiration process. Both reactions occur simultaneously and in competition at the same active site. The chain is Ribulose bisphosphate carboxylase large chain from Gracilaria tenuistipitata var. liui (Red alga).